The primary structure comprises 108 residues: Large ribosomal subunit protein uL24 (108 aa).

It belongs to the universal ribosomal protein uL24 family. In terms of assembly, part of the 50S ribosomal subunit.

Its function is as follows. One of two assembly initiator proteins, it binds directly to the 5'-end of the 23S rRNA, where it nucleates assembly of the 50S subunit. One of the proteins that surrounds the polypeptide exit tunnel on the outside of the subunit. This Frankia casuarinae (strain DSM 45818 / CECT 9043 / HFP020203 / CcI3) protein is Large ribosomal subunit protein uL24.